Consider the following 357-residue polypeptide: Probable cinnamyl alcohol dehydrogenase 1 (357 aa).

C47 contributes to the Zn(2+) binding site. T49 is a binding site for NADP(+). The Zn(2+) site is built by H69, E70, C100, C103, C106, C114, and C163. Residues T167, 188 to 193, 211 to 216, T251, G275, and 298 to 300 contribute to the NADP(+) site; these read GLGGVG, SSSNKK, and SFI.

It belongs to the zinc-containing alcohol dehydrogenase family. Homodimer. It depends on Zn(2+) as a cofactor. The N-terminus is blocked.

The catalysed reaction is (E)-cinnamyl alcohol + NADP(+) = (E)-cinnamaldehyde + NADPH + H(+). It carries out the reaction (E)-coniferol + NADP(+) = (E)-coniferaldehyde + NADPH + H(+). It catalyses the reaction (E)-sinapyl alcohol + NADP(+) = (E)-sinapaldehyde + NADPH + H(+). The enzyme catalyses (E)-4-coumaroyl alcohol + NADP(+) = (E)-4-coumaraldehyde + NADPH + H(+). The catalysed reaction is (E)-caffeyl alcohol + NADP(+) = (E)-caffeyl aldehyde + NADPH + H(+). Its pathway is aromatic compound metabolism; phenylpropanoid biosynthesis. Functionally, involved in lignin biosynthesis. Catalyzes the final step specific for the production of lignin monomers. Catalyzes the NADPH-dependent reduction of coniferaldehyde, 5-hydroxyconiferaldehyde, sinapaldehyde, 4-coumaraldehyde and caffeyl aldehyde to their respective alcohols. The chain is Probable cinnamyl alcohol dehydrogenase 1 from Nicotiana tabacum (Common tobacco).